A 96-amino-acid chain; its full sequence is Protein RnfH (96 aa).

Belongs to the UPF0125 (RnfH) family.

This is Protein RnfH from Escherichia coli O139:H28 (strain E24377A / ETEC).